Reading from the N-terminus, the 404-residue chain is Immediate early response gene 5-like protein (404 aa).

3 disordered regions span residues 86–107 (AADF…EPAA), 160–231 (AALQ…APAS), and 308–327 (QEEE…EPPG). A compositionally biased stretch (pro residues) spans 177-194 (PLQPGPAPLPLPLPPPAP). A compositionally biased stretch (low complexity) spans 195 to 231 (AALCPRDPRAPAACSAPPGAAPPAAAASPPASPAPAS). Residues 308–318 (QEEEEDDEEDA) are compositionally biased toward acidic residues.

Belongs to the IER family.

The sequence is that of Immediate early response gene 5-like protein (IER5L) from Homo sapiens (Human).